We begin with the raw amino-acid sequence, 729 residues long: Fatty acid oxidation complex subunit alpha (729 aa).

The segment at 1–189 (MLYKGDTLYL…KIGLVDGVVK (189 aa)) is enoyl-CoA hydratase/isomerase. Substrate is bound at residue D296. Residues 311-729 (ETPKQAAVLG…ARPVGDLKTA (419 aa)) are 3-hydroxyacyl-CoA dehydrogenase. Residues M324, D343, 400-402 (VVE), K407, and S429 each bind NAD(+). H450 functions as the For 3-hydroxyacyl-CoA dehydrogenase activity in the catalytic mechanism. NAD(+) is bound at residue N453. The substrate site is built by N500 and Y660. A disordered region spans residues 708–729 (RHNEPYYPPVEPARPVGDLKTA).

In the N-terminal section; belongs to the enoyl-CoA hydratase/isomerase family. The protein in the C-terminal section; belongs to the 3-hydroxyacyl-CoA dehydrogenase family. As to quaternary structure, heterotetramer of two alpha chains (FadB) and two beta chains (FadA).

The enzyme catalyses a (3S)-3-hydroxyacyl-CoA + NAD(+) = a 3-oxoacyl-CoA + NADH + H(+). The catalysed reaction is a (3S)-3-hydroxyacyl-CoA = a (2E)-enoyl-CoA + H2O. It catalyses the reaction a 4-saturated-(3S)-3-hydroxyacyl-CoA = a (3E)-enoyl-CoA + H2O. It carries out the reaction (3S)-3-hydroxybutanoyl-CoA = (3R)-3-hydroxybutanoyl-CoA. The enzyme catalyses a (3Z)-enoyl-CoA = a 4-saturated (2E)-enoyl-CoA. The catalysed reaction is a (3E)-enoyl-CoA = a 4-saturated (2E)-enoyl-CoA. It functions in the pathway lipid metabolism; fatty acid beta-oxidation. Its function is as follows. Involved in the aerobic and anaerobic degradation of long-chain fatty acids via beta-oxidation cycle. Catalyzes the formation of 3-oxoacyl-CoA from enoyl-CoA via L-3-hydroxyacyl-CoA. It can also use D-3-hydroxyacyl-CoA and cis-3-enoyl-CoA as substrate. This chain is Fatty acid oxidation complex subunit alpha, found in Escherichia coli O81 (strain ED1a).